We begin with the raw amino-acid sequence, 96 residues long: Co-chaperonin GroES (96 aa).

The protein belongs to the GroES chaperonin family. In terms of assembly, heptamer of 7 subunits arranged in a ring. Interacts with the chaperonin GroEL.

Its subcellular location is the cytoplasm. Together with the chaperonin GroEL, plays an essential role in assisting protein folding. The GroEL-GroES system forms a nano-cage that allows encapsulation of the non-native substrate proteins and provides a physical environment optimized to promote and accelerate protein folding. GroES binds to the apical surface of the GroEL ring, thereby capping the opening of the GroEL channel. The chain is Co-chaperonin GroES from Herminiimonas arsenicoxydans.